The chain runs to 224 residues: Ribose-5-phosphate isomerase A (224 aa).

Substrate-binding positions include Thr-26–Thr-29, Asp-81–Asp-84, and Lys-94–Gly-97. Catalysis depends on Glu-103, which acts as the Proton acceptor. Residue Lys-121 coordinates substrate.

The protein belongs to the ribose 5-phosphate isomerase family. As to quaternary structure, homodimer.

The catalysed reaction is aldehydo-D-ribose 5-phosphate = D-ribulose 5-phosphate. Its pathway is carbohydrate degradation; pentose phosphate pathway; D-ribose 5-phosphate from D-ribulose 5-phosphate (non-oxidative stage): step 1/1. Functionally, catalyzes the reversible conversion of ribose-5-phosphate to ribulose 5-phosphate. In Listeria innocua serovar 6a (strain ATCC BAA-680 / CLIP 11262), this protein is Ribose-5-phosphate isomerase A.